A 433-amino-acid polypeptide reads, in one-letter code: UPF0761 membrane protein Sde_0901 (433 aa).

The next 6 membrane-spanning stretches (helical) occupy residues 46–66 (LFAMVPLMAVFYSMFSMFPAF), 103–123 (LSAAGAGLLVVTAYLMLTNIE), 142–162 (FLLYWAVLTIGPLLLGAGLAM), 185–205 (FFSYLPLFTTSAAFTLLFAAV), 217–237 (IGGILTAVCFELLKIGFGWVV), and 247–267 (GAFAVVPLFLLWVNLLWMIIL).

The protein belongs to the UPF0761 family.

The protein resides in the cell inner membrane. This Saccharophagus degradans (strain 2-40 / ATCC 43961 / DSM 17024) protein is UPF0761 membrane protein Sde_0901.